Here is a 437-residue protein sequence, read N- to C-terminus: MIFPIWKKCLIQLQIKLSPVEFSLWILPLKVTIKNNIIYIYTPNLFIFRWIKKKYVNIFKKILYKICSNNPPKIIINIEKKKLEKKKCIYKKKNIQIYLHSEINKKYQFHNFIQGQSNQLAYYSSYKFTKNLKNFYNPLFLYGNTGLGKTHLLHAIGNKFLIKNKKKKVIYIHSENFIQNMVNSLKNNSIDKFKNYYRSIDVLLLDDIQFFSNKKKSQEELFNTFNTLFNKQQKIVLTADCYPEYISGITEQLKSRFKWGLTISINPPELKTRIKILLHKAYENKILLSYEVAKYIAKKIFSNVRELEGILKKIQILSILNKEKITINLVKKILNKIKKKKKNINIIYIQKIVAKYFNIRISDMISQKRSQSIVHPRQIAMTLAKKLTHYSFSEIGTAFGKKDHTTVLYAYKKINQLKKKKTEIYSDFIYLFNQLNA.

The domain I, interacts with DnaA modulators stretch occupies residues 1–82 (MIFPIWKKCL…KIIINIEKKK (82 aa)). The interval 82 to 101 (KLEKKKCIYKKKNIQIYLHS) is domain II. A domain III, AAA+ region region spans residues 102–318 (EINKKYQFHN…GILKKIQILS (217 aa)). ATP-binding residues include Gly146, Gly148, Lys149, and Thr150. Residues 319-437 (ILNKEKITIN…FIYLFNQLNA (119 aa)) are domain IV, binds dsDNA.

The protein belongs to the DnaA family. Oligomerizes as a right-handed, spiral filament on DNA at oriC.

The protein localises to the cytoplasm. Functionally, plays an essential role in the initiation and regulation of chromosomal replication. ATP-DnaA binds to the origin of replication (oriC) to initiate formation of the DNA replication initiation complex once per cell cycle. Binds the DnaA box (a 9 base pair repeat at the origin) and separates the double-stranded (ds)DNA. Forms a right-handed helical filament on oriC DNA; dsDNA binds to the exterior of the filament while single-stranded (ss)DNA is stabiized in the filament's interior. The ATP-DnaA-oriC complex binds and stabilizes one strand of the AT-rich DNA unwinding element (DUE), permitting loading of DNA polymerase. After initiation quickly degrades to an ADP-DnaA complex that is not apt for DNA replication. Binds acidic phospholipids. The chain is Chromosomal replication initiator protein DnaA from Buchnera aphidicola subsp. Cinara cedri (strain Cc).